Consider the following 189-residue polypeptide: Apolipoprotein D (189 aa).

A signal peptide spans Met-1–Gly-20. A Pyrrolidone carboxylic acid modification is found at Gln-21. Disulfide bonds link Cys-28-Cys-134 and Cys-61-Cys-185. Residues Asn-65 and Asn-98 are each glycosylated (N-linked (GlcNAc...) asparagine).

The protein belongs to the calycin superfamily. Lipocalin family. Homodimer.

The protein localises to the secreted. APOD occurs in the macromolecular complex with lecithin-transport and binding of bilin. Appears to be able to transport a variety of ligands in a number of different contexts. The sequence is that of Apolipoprotein D (APOD) from Bos taurus (Bovine).